The chain runs to 184 residues: ATP synthase subunit delta (184 aa).

It belongs to the ATPase delta chain family. In terms of assembly, F-type ATPases have 2 components, F(1) - the catalytic core - and F(0) - the membrane proton channel. F(1) has five subunits: alpha(3), beta(3), gamma(1), delta(1), epsilon(1). F(0) has three main subunits: a(1), b(2) and c(10-14). The alpha and beta chains form an alternating ring which encloses part of the gamma chain. F(1) is attached to F(0) by a central stalk formed by the gamma and epsilon chains, while a peripheral stalk is formed by the delta and b chains.

It localises to the cell membrane. Its function is as follows. F(1)F(0) ATP synthase produces ATP from ADP in the presence of a proton or sodium gradient. F-type ATPases consist of two structural domains, F(1) containing the extramembraneous catalytic core and F(0) containing the membrane proton channel, linked together by a central stalk and a peripheral stalk. During catalysis, ATP synthesis in the catalytic domain of F(1) is coupled via a rotary mechanism of the central stalk subunits to proton translocation. This protein is part of the stalk that links CF(0) to CF(1). It either transmits conformational changes from CF(0) to CF(1) or is implicated in proton conduction. This chain is ATP synthase subunit delta, found in Rickettsia africae (strain ESF-5).